The chain runs to 225 residues: UPF0173 metal-dependent hydrolase PH1671 (225 aa).

It belongs to the UPF0173 family.

This is UPF0173 metal-dependent hydrolase PH1671 from Pyrococcus horikoshii (strain ATCC 700860 / DSM 12428 / JCM 9974 / NBRC 100139 / OT-3).